Here is a 326-residue protein sequence, read N- to C-terminus: Aspartate carbamoyltransferase catalytic subunit (326 aa).

2 residues coordinate carbamoyl phosphate: Arg-58 and Thr-59. L-aspartate is bound at residue Lys-86. Arg-108, His-141, and Gln-144 together coordinate carbamoyl phosphate. Residues Arg-181 and Arg-239 each contribute to the L-aspartate site. Positions 280 and 281 each coordinate carbamoyl phosphate.

Belongs to the aspartate/ornithine carbamoyltransferase superfamily. ATCase family. In terms of assembly, heterododecamer (2C3:3R2) of six catalytic PyrB chains organized as two trimers (C3), and six regulatory PyrI chains organized as three dimers (R2).

It carries out the reaction carbamoyl phosphate + L-aspartate = N-carbamoyl-L-aspartate + phosphate + H(+). It functions in the pathway pyrimidine metabolism; UMP biosynthesis via de novo pathway; (S)-dihydroorotate from bicarbonate: step 2/3. Its function is as follows. Catalyzes the condensation of carbamoyl phosphate and aspartate to form carbamoyl aspartate and inorganic phosphate, the committed step in the de novo pyrimidine nucleotide biosynthesis pathway. This Synechococcus sp. (strain JA-2-3B'a(2-13)) (Cyanobacteria bacterium Yellowstone B-Prime) protein is Aspartate carbamoyltransferase catalytic subunit.